The sequence spans 388 residues: Xylose isomerase (388 aa).

Catalysis depends on residues His-54 and Asp-57. Positions 181, 217, 220, 245, 255, 257, and 287 each coordinate Mg(2+).

Belongs to the xylose isomerase family. As to quaternary structure, homotetramer. Requires Mg(2+) as cofactor.

The protein localises to the cytoplasm. It carries out the reaction alpha-D-xylose = alpha-D-xylulofuranose. The protein is Xylose isomerase of Streptomyces corchorusii (Streptomyces chibaensis).